The following is a 423-amino-acid chain: UDP-N-acetylglucosamine 1-carboxyvinyltransferase 2 (423 aa).

23-24 provides a ligand contact to phosphoenolpyruvate; it reads KN. Residue arginine 96 coordinates UDP-N-acetyl-alpha-D-glucosamine. Cysteine 120 functions as the Proton donor in the catalytic mechanism. Position 120 is a 2-(S-cysteinyl)pyruvic acid O-phosphothioketal (cysteine 120). UDP-N-acetyl-alpha-D-glucosamine is bound by residues 125–129, aspartate 309, and valine 331; that span reads RPIDL.

Belongs to the EPSP synthase family. MurA subfamily.

The protein localises to the cytoplasm. It catalyses the reaction phosphoenolpyruvate + UDP-N-acetyl-alpha-D-glucosamine = UDP-N-acetyl-3-O-(1-carboxyvinyl)-alpha-D-glucosamine + phosphate. It functions in the pathway cell wall biogenesis; peptidoglycan biosynthesis. In terms of biological role, cell wall formation. Adds enolpyruvyl to UDP-N-acetylglucosamine. In Streptococcus agalactiae serotype Ia (strain ATCC 27591 / A909 / CDC SS700), this protein is UDP-N-acetylglucosamine 1-carboxyvinyltransferase 2.